Consider the following 206-residue polypeptide: Protein OPG030 (206 aa).

The 83-residue stretch at 99–181 (FLRQYINNNI…ITYSELTNAI (83 aa)) folds into the BACK domain.

Belongs to the orthopoxvirus OPG030 family.

This is Protein OPG030 (OPG030) from Cynomys gunnisoni (Gunnison's prairie dog).